The chain runs to 88 residues: Translation initiation factor IF-1 2 (88 aa).

An S1-like domain is found at 1–72 (MAKEELIEMQ…TKGRITFRHL (72 aa)).

The protein belongs to the IF-1 family. Component of the 30S ribosomal translation pre-initiation complex which assembles on the 30S ribosome in the order IF-2 and IF-3, IF-1 and N-formylmethionyl-tRNA(fMet); mRNA recruitment can occur at any time during PIC assembly.

The protein resides in the cytoplasm. One of the essential components for the initiation of protein synthesis. Stabilizes the binding of IF-2 and IF-3 on the 30S subunit to which N-formylmethionyl-tRNA(fMet) subsequently binds. Helps modulate mRNA selection, yielding the 30S pre-initiation complex (PIC). Upon addition of the 50S ribosomal subunit IF-1, IF-2 and IF-3 are released leaving the mature 70S translation initiation complex. This Acidovorax sp. (strain JS42) protein is Translation initiation factor IF-1 2.